We begin with the raw amino-acid sequence, 108 residues long: Nucleoid-associated protein Mmwyl1_2533 (108 aa).

Residues M1–K22 form a disordered region. Positions R11–K22 are enriched in polar residues.

The protein belongs to the YbaB/EbfC family. In terms of assembly, homodimer.

The protein resides in the cytoplasm. The protein localises to the nucleoid. Functionally, binds to DNA and alters its conformation. May be involved in regulation of gene expression, nucleoid organization and DNA protection. The protein is Nucleoid-associated protein Mmwyl1_2533 of Marinomonas sp. (strain MWYL1).